The chain runs to 145 residues: Ribosome maturation factor RimP (145 aa).

The protein belongs to the RimP family.

Its subcellular location is the cytoplasm. Its function is as follows. Required for maturation of 30S ribosomal subunits. This Borreliella burgdorferi (strain ATCC 35210 / DSM 4680 / CIP 102532 / B31) (Borrelia burgdorferi) protein is Ribosome maturation factor RimP.